We begin with the raw amino-acid sequence, 476 residues long: Glycogen synthase (476 aa).

Lys-15 lines the ADP-alpha-D-glucose pocket.

This sequence belongs to the glycosyltransferase 1 family. Bacterial/plant glycogen synthase subfamily.

The catalysed reaction is [(1-&gt;4)-alpha-D-glucosyl](n) + ADP-alpha-D-glucose = [(1-&gt;4)-alpha-D-glucosyl](n+1) + ADP + H(+). It functions in the pathway glycan biosynthesis; glycogen biosynthesis. Its function is as follows. Synthesizes alpha-1,4-glucan chains using ADP-glucose. In Streptococcus agalactiae serotype Ia (strain ATCC 27591 / A909 / CDC SS700), this protein is Glycogen synthase.